Reading from the N-terminus, the 223-residue chain is Ribose-5-phosphate isomerase A (223 aa).

Residues 32-35 (TGST), 85-88 (DGAD), and 98-101 (KGGG) contribute to the substrate site. E107 acts as the Proton acceptor in catalysis. Substrate is bound at residue K125.

It belongs to the ribose 5-phosphate isomerase family. In terms of assembly, homodimer.

The catalysed reaction is aldehydo-D-ribose 5-phosphate = D-ribulose 5-phosphate. The protein operates within carbohydrate degradation; pentose phosphate pathway; D-ribose 5-phosphate from D-ribulose 5-phosphate (non-oxidative stage): step 1/1. Functionally, catalyzes the reversible conversion of ribose-5-phosphate to ribulose 5-phosphate. This chain is Ribose-5-phosphate isomerase A, found in Pseudomonas savastanoi pv. phaseolicola (strain 1448A / Race 6) (Pseudomonas syringae pv. phaseolicola (strain 1448A / Race 6)).